We begin with the raw amino-acid sequence, 729 residues long: Fatty acid oxidation complex subunit alpha (729 aa).

The enoyl-CoA hydratase/isomerase stretch occupies residues 1–189 (MLYQSETLQL…KIGLVDAVVD (189 aa)). A substrate-binding site is contributed by Asp296. The 3-hydroxyacyl-CoA dehydrogenase stretch occupies residues 311 to 729 (AAPKLAAVLG…LLDVSTNQPA (419 aa)). NAD(+) is bound by residues Met324, Asp343, 400-402 (VVE), Lys407, and Ser429. His450 serves as the catalytic For 3-hydroxyacyl-CoA dehydrogenase activity. An NAD(+)-binding site is contributed by Asn453. Positions 500 and 660 each coordinate substrate.

This sequence in the N-terminal section; belongs to the enoyl-CoA hydratase/isomerase family. In the C-terminal section; belongs to the 3-hydroxyacyl-CoA dehydrogenase family. In terms of assembly, heterotetramer of two alpha chains (FadB) and two beta chains (FadA).

The catalysed reaction is a (3S)-3-hydroxyacyl-CoA + NAD(+) = a 3-oxoacyl-CoA + NADH + H(+). The enzyme catalyses a (3S)-3-hydroxyacyl-CoA = a (2E)-enoyl-CoA + H2O. It catalyses the reaction a 4-saturated-(3S)-3-hydroxyacyl-CoA = a (3E)-enoyl-CoA + H2O. It carries out the reaction (3S)-3-hydroxybutanoyl-CoA = (3R)-3-hydroxybutanoyl-CoA. The catalysed reaction is a (3Z)-enoyl-CoA = a 4-saturated (2E)-enoyl-CoA. The enzyme catalyses a (3E)-enoyl-CoA = a 4-saturated (2E)-enoyl-CoA. The protein operates within lipid metabolism; fatty acid beta-oxidation. In terms of biological role, involved in the aerobic and anaerobic degradation of long-chain fatty acids via beta-oxidation cycle. Catalyzes the formation of 3-oxoacyl-CoA from enoyl-CoA via L-3-hydroxyacyl-CoA. It can also use D-3-hydroxyacyl-CoA and cis-3-enoyl-CoA as substrate. In Yersinia pseudotuberculosis serotype O:1b (strain IP 31758), this protein is Fatty acid oxidation complex subunit alpha.